A 650-amino-acid chain; its full sequence is MADSGNWEGRCTGWFNVEAIVERKTGDPIPEDENYDGGDTDESEMGDFIDNAHIPNIYAQQEIAQALYQSQQANADNEAIRVLKRKFTGSPGGSPDMKRDEFIDKQLSPQINVLSISSGRSTSKRRLFEEQDSGYGNTEVETYETEVPGLGAGVGCLQNVNEEGNQIVSPRESSSGSSSISNMDIETESTPITDITNLLQRNNAKAALLAKFKEVYGLSYMELVRPYKSDKTHCQDWVCAVFGVIPSLAESLKSLLTQYCMYIHLQCLTCTWGIIVLVLVRFKCNKNRLTVQKLLSSLLNVTQERMLIEPPRLRSTPCALYWYRTSLSNISEIVGDTPEWIKRQTLVQHSLDDSQFDLSQMIQWAFDNDITDDCEIAYKYALLGNVDSNAAAFLKSNAQAKYVKDCGTMCRHYKAAERKQMSMAQWIQHRCDLTNDGGNWKDIVLFLRYQNVEFMPFLITLKQFLKGIPKQNCIVLYGPPDTGKSHFGMSLIKFIQGVVISYVNSTSHFWLSPLADAKMALLDDATPGCWTYIDKYLRNALDGNPICLDRKHKNLLQVKCPPLLITSNTNPKADDTWKYLHSRIKVFTFLNPFPFDSNGNPLYQLTNENWKAFFTKTWSKLDLTEDDDKENDGDTVQTFKCVSGRNPRTV.

Positions 84 to 86 (KRK) match the Nuclear localization signal motif. 4 positions are modified to phosphoserine; by host: Ser-90, Ser-94, Ser-108, and Ser-121. The Nuclear export signal signature appears at 107–116 (LSPQINVLSI). A DNA-binding region region spans residues 187-353 (TESTPITDIT…QTLVQHSLDD (167 aa)). One can recognise an SF3 helicase domain in the interval 452–602 (VEFMPFLITL…FPFDSNGNPL (151 aa)). 478 to 485 (GPPDTGKS) is a binding site for ATP. Lys-559 participates in a covalent cross-link: Glycyl lysine isopeptide (Lys-Gly) (interchain with G-Cter in SUMO).

This sequence belongs to the papillomaviridae E1 protein family. Can form hexamers. Interacts with E2 protein; this interaction increases E1 DNA binding specificity. Interacts with host DNA polymerase subunit POLA2. Interacts with host single stranded DNA-binding protein RPA1. Interacts with host TOP1; this interaction stimulates the enzymatic activity of TOP1. Post-translationally, phosphorylated. In terms of processing, sumoylated.

It localises to the host nucleus. It carries out the reaction Couples ATP hydrolysis with the unwinding of duplex DNA by translocating in the 3'-5' direction.. It catalyses the reaction ATP + H2O = ADP + phosphate + H(+). In terms of biological role, ATP-dependent DNA 3'-5' helicase required for initiation of viral DNA replication. It forms a complex with the viral E2 protein. The E1-E2 complex binds to the replication origin which contains binding sites for both proteins. During the initial step, a dimer of E1 interacts with a dimer of protein E2 leading to a complex that binds the viral origin of replication with high specificity. Then, a second dimer of E1 displaces the E2 dimer in an ATP-dependent manner to form the E1 tetramer. Following this, two E1 monomers are added to each half of the site, which results in the formation of two E1 trimers on the viral ori. Subsequently, two hexamers will be created. The double hexamer acts as a bi-directional helicase machinery and unwinds the viral DNA and then recruits the host DNA polymerase to start replication. The sequence is that of Replication protein E1 from Homo sapiens (Human).